Consider the following 85-residue polypeptide: Actobindin homolog (85 aa).

A WH2 domain is found at 35–52 (DRNELLSGIKEGKELKKA).

Its function is as follows. Is able to bind two actin monomers at high concentrations of G-actin. In Entamoeba histolytica, this protein is Actobindin homolog.